We begin with the raw amino-acid sequence, 64 residues long: Small ribosomal subunit protein eS17 (64 aa).

It belongs to the eukaryotic ribosomal protein eS17 family.

The sequence is that of Small ribosomal subunit protein eS17 from Natronomonas pharaonis (strain ATCC 35678 / DSM 2160 / CIP 103997 / JCM 8858 / NBRC 14720 / NCIMB 2260 / Gabara) (Halobacterium pharaonis).